We begin with the raw amino-acid sequence, 99 residues long: Aspartyl/glutamyl-tRNA(Asn/Gln) amidotransferase subunit C (99 aa).

This sequence belongs to the GatC family. Heterotrimer of A, B and C subunits.

It carries out the reaction L-glutamyl-tRNA(Gln) + L-glutamine + ATP + H2O = L-glutaminyl-tRNA(Gln) + L-glutamate + ADP + phosphate + H(+). It catalyses the reaction L-aspartyl-tRNA(Asn) + L-glutamine + ATP + H2O = L-asparaginyl-tRNA(Asn) + L-glutamate + ADP + phosphate + 2 H(+). Its function is as follows. Allows the formation of correctly charged Asn-tRNA(Asn) or Gln-tRNA(Gln) through the transamidation of misacylated Asp-tRNA(Asn) or Glu-tRNA(Gln) in organisms which lack either or both of asparaginyl-tRNA or glutaminyl-tRNA synthetases. The reaction takes place in the presence of glutamine and ATP through an activated phospho-Asp-tRNA(Asn) or phospho-Glu-tRNA(Gln). This is Aspartyl/glutamyl-tRNA(Asn/Gln) amidotransferase subunit C from Paraburkholderia xenovorans (strain LB400).